Here is a 228-residue protein sequence, read N- to C-terminus: Ribulose-phosphate 3-epimerase (228 aa).

Serine 12 provides a ligand contact to substrate. A divalent metal cation-binding residues include histidine 37, aspartate 39, and histidine 70. Catalysis depends on aspartate 39, which acts as the Proton acceptor. Residues histidine 70, 146 to 149 (GFGG), 176 to 178 (DGG), and 198 to 199 (GS) each bind substrate. Aspartate 176 contacts a divalent metal cation. Catalysis depends on aspartate 176, which acts as the Proton donor.

This sequence belongs to the ribulose-phosphate 3-epimerase family. It depends on a divalent metal cation as a cofactor.

It catalyses the reaction D-ribulose 5-phosphate = D-xylulose 5-phosphate. Its pathway is carbohydrate degradation. Its function is as follows. Catalyzes the reversible epimerization of D-ribulose 5-phosphate to D-xylulose 5-phosphate. The sequence is that of Ribulose-phosphate 3-epimerase from Rhodobacter capsulatus (Rhodopseudomonas capsulata).